Here is a 92-residue protein sequence, read N- to C-terminus: Acyl carrier protein (92 aa).

Residues 1–84 (MPSTADERQL…QIAAHLAEAV (84 aa)) form the Carrier domain. Serine 44 bears the O-(pantetheine 4'-phosphoryl)serine mark.

It belongs to the acyl carrier protein (ACP) family. 4'-phosphopantetheine is transferred from CoA to a specific serine of apo-ACP by AcpS. This modification is essential for activity because fatty acids are bound in thioester linkage to the sulfhydryl of the prosthetic group.

It localises to the cytoplasm. It participates in lipid metabolism; fatty acid biosynthesis. Carrier of the growing fatty acid chain in fatty acid biosynthesis. This is Acyl carrier protein from Streptomyces coelicolor (strain ATCC BAA-471 / A3(2) / M145).